The sequence spans 201 residues: 3-isopropylmalate dehydratase small subunit (201 aa).

This sequence belongs to the LeuD family. LeuD type 1 subfamily. In terms of assembly, heterodimer of LeuC and LeuD.

It catalyses the reaction (2R,3S)-3-isopropylmalate = (2S)-2-isopropylmalate. It functions in the pathway amino-acid biosynthesis; L-leucine biosynthesis; L-leucine from 3-methyl-2-oxobutanoate: step 2/4. Its function is as follows. Catalyzes the isomerization between 2-isopropylmalate and 3-isopropylmalate, via the formation of 2-isopropylmaleate. In Thermus thermophilus (strain ATCC 27634 / DSM 579 / HB8), this protein is 3-isopropylmalate dehydratase small subunit (leuD).